The sequence spans 216 residues: Purine nucleoside phosphorylase DeoD-type (216 aa).

Residues Arg4, Arg23, and Arg67–Thr70 each bind phosphate. A purine D-ribonucleoside-binding positions include Glu159–Glu161 and Ser183–Asp184. Asp184 functions as the Proton donor in the catalytic mechanism.

It belongs to the PNP/UDP phosphorylase family. In terms of assembly, homohexamer; trimer of homodimers.

It carries out the reaction a purine D-ribonucleoside + phosphate = a purine nucleobase + alpha-D-ribose 1-phosphate. The catalysed reaction is a purine 2'-deoxy-D-ribonucleoside + phosphate = a purine nucleobase + 2-deoxy-alpha-D-ribose 1-phosphate. Its function is as follows. Catalyzes the reversible phosphorolytic breakdown of the N-glycosidic bond in the beta-(deoxy)ribonucleoside molecules, with the formation of the corresponding free purine bases and pentose-1-phosphate. This Streptococcus thermophilus protein is Purine nucleoside phosphorylase DeoD-type.